The following is a 413-amino-acid chain: MSFRDLRNFTEMMRALGYPRHISMENFRTPNFGLVSEVLLWLVKRYEPQTDIPSDIETEQDRVFFIKAIAQFMATKAHIKLNTKKLYQADGYAVKELLKITSVLYNAMKTKGMEGSNVGEEDISKFKFDLGSKIADLKAARQLASEITAKGASLYDLLGKEVELRELRTEAIARPLEINETEKVMRIAIKDLLAQVQKTKDLLNNVASDEANLEAKIEKRKLELERNRKRLQTLQSVRPAFMDEYEKVEEDLQKQYDVYLEKFRNLAYLEQQLEDHHRMEQERFEEAENTLRLMQNKLKEEEKRLLKSGSNDDSDIDIQEDDESDSELEDRRMSKPRTAMEVLMQGRPSKRIVGAMQGGDSDEDEDSEDSEIDMEDDEEDDDDLEDESIALSPAKPSRRIRKPEPLDESDNDF.

Positions 185 to 308 form a coiled coil; that stretch reads MRIAIKDLLA…KEEEKRLLKS (124 aa). The disordered stretch occupies residues 303-413; it reads KRLLKSGSND…EPLDESDNDF (111 aa). Acidic residues-rich tracts occupy residues 312–328 and 360–388; these read DDSD…DSEL and DSDE…EDES. Phosphoserine is present on residues serine 314, serine 324, and serine 326. Serine 409 carries the phosphoserine modification.

It belongs to the CLUAP1 family. Interacts with CLU/clusterin. Interacts with UBXN10; the interaction is direct. As to expression, expressed in all tissues tested including heart, kidney, skeletal muscle, eye, liver, ovary, oviduct, testes, lung and brain. Elevated levels in multiciliated cells such as the bronchioles of the lungs, ependymal cells of the brain and cells with a single primary cilia of heart and kidney.

Its subcellular location is the cell projection. It localises to the cilium. It is found in the nucleus. Required for cilia biogenesis. Appears to function within the multiple intraflagellar transport complex B (IFT-B). Key regulator of hedgehog signaling. The protein is Clusterin-associated protein 1 (Cluap1) of Mus musculus (Mouse).